Reading from the N-terminus, the 365-residue chain is uncharacterized protein (365 aa).

Disordered stretches follow at residues 119-157, 216-298, and 313-365; these read ERSR…QQES, RPPG…DISH, and SHHH…LSVG. The span at 326–340 shows a compositional bias: basic and acidic residues; sequence SDPRIESRDLPERPQ.

This is an uncharacterized protein from Homo sapiens (Human).